The sequence spans 859 residues: DNA mismatch repair protein MutS (859 aa).

618–625 (GPNMGGKS) contributes to the ATP binding site.

This sequence belongs to the DNA mismatch repair MutS family.

Its function is as follows. This protein is involved in the repair of mismatches in DNA. It is possible that it carries out the mismatch recognition step. This protein has a weak ATPase activity. The protein is DNA mismatch repair protein MutS of Shewanella sediminis (strain HAW-EB3).